We begin with the raw amino-acid sequence, 687 residues long: DNA ligase (687 aa).

NAD(+) is bound by residues 33 to 37 (DAEFD), 83 to 84 (SL), and Glu-113. Lys-115 acts as the N6-AMP-lysine intermediate in catalysis. Residues Arg-136, Glu-176, Lys-292, and Lys-316 each coordinate NAD(+). Positions 410, 413, 429, and 435 each coordinate Zn(2+). Positions 599 to 687 (SVPRTLAGVT…GPPAEVGEPT (89 aa)) constitute a BRCT domain.

The protein belongs to the NAD-dependent DNA ligase family. LigA subfamily. The cofactor is Mg(2+). Requires Mn(2+) as cofactor.

The catalysed reaction is NAD(+) + (deoxyribonucleotide)n-3'-hydroxyl + 5'-phospho-(deoxyribonucleotide)m = (deoxyribonucleotide)n+m + AMP + beta-nicotinamide D-nucleotide.. Functionally, DNA ligase that catalyzes the formation of phosphodiester linkages between 5'-phosphoryl and 3'-hydroxyl groups in double-stranded DNA using NAD as a coenzyme and as the energy source for the reaction. It is essential for DNA replication and repair of damaged DNA. The sequence is that of DNA ligase from Mycobacterium marinum (strain ATCC BAA-535 / M).